The sequence spans 275 residues: Large ribosomal subunit protein uL2 (275 aa).

Positions 221–275 (VRGVAMNPVDHPMGGGEGKSSGGRHPCSPWGQQSKGVRTRNNKRTDQFIVKRRSK) are disordered.

This sequence belongs to the universal ribosomal protein uL2 family. As to quaternary structure, part of the 50S ribosomal subunit. Forms a bridge to the 30S subunit in the 70S ribosome.

Its function is as follows. One of the primary rRNA binding proteins. Required for association of the 30S and 50S subunits to form the 70S ribosome, for tRNA binding and peptide bond formation. It has been suggested to have peptidyltransferase activity; this is somewhat controversial. Makes several contacts with the 16S rRNA in the 70S ribosome. This Desulfosudis oleivorans (strain DSM 6200 / JCM 39069 / Hxd3) (Desulfococcus oleovorans) protein is Large ribosomal subunit protein uL2.